We begin with the raw amino-acid sequence, 758 residues long: Long-chain-alcohol oxidase FAO1 (758 aa).

2 helical membrane passes run 102–122 (IVLRILTFRLGTLLLCGLVCL) and 155–175 (PLARIGFMMIKAIFLFYYFTW). 246 to 261 (CDAVVVGSGCGGGVAA) contacts FAD. The Proton acceptor role is filled by His689.

The protein belongs to the GMC oxidoreductase family.

It localises to the membrane. The catalysed reaction is a long-chain primary fatty alcohol + O2 = a long-chain fatty aldehyde + H2O2. Its function is as follows. Long-chain fatty alcohol oxidase involved in the omega-oxidation pathway of lipid degradation. The sequence is that of Long-chain-alcohol oxidase FAO1 (FAO1) from Arabidopsis thaliana (Mouse-ear cress).